The primary structure comprises 194 residues: PRELI domain containing protein 3B (194 aa).

Residues M1–E172 form the PRELI/MSF1 domain. S46 and S51 each carry phosphoserine.

The protein belongs to the slowmo family.

The protein is PRELI domain containing protein 3B (PRELID3B) of Macaca fascicularis (Crab-eating macaque).